The following is a 290-amino-acid chain: tRNA (adenine(58)-N(1))-methyltransferase catalytic subunit TRMT61A (290 aa).

Serine 2 is modified (N-acetylserine). 5 substrate regions span residues 20 to 22 (LGH), 35 to 42 (QTQTRHGV), 64 to 65 (GW), 85 to 89 (QILYS), and 110 to 117 (SGTGSGSV). Residues leucine 87, 114-116 (SGS), glutamate 135, arginine 140, 163-164 (DV), and aspartate 181 each bind S-adenosyl-L-methionine. Substrate stretches follow at residues 180 to 183 (LDIP) and 205 to 212 (SFSPCIEQ). A Phosphoserine modification is found at serine 264. Threonine 279 contacts substrate.

It belongs to the class I-like SAM-binding methyltransferase superfamily. TRM61 family. In terms of assembly, heterotetramer; composed of two copies of TRMT6 and two copies of TRMT61A.

It localises to the nucleus. The enzyme catalyses adenosine(58) in tRNA + S-adenosyl-L-methionine = N(1)-methyladenosine(58) in tRNA + S-adenosyl-L-homocysteine + H(+). The catalysed reaction is an adenosine in mRNA + S-adenosyl-L-methionine = an N(1)-methyladenosine in mRNA + S-adenosyl-L-homocysteine + H(+). Its function is as follows. Catalytic subunit of tRNA (adenine-N(1)-)-methyltransferase, which catalyzes the formation of N(1)-methyladenine at position 58 (m1A58) in initiator methionyl-tRNA. Catalytic subunit of mRNA N(1)-methyltransferase complex, which mediates methylation of adenosine residues at the N(1) position of a small subset of mRNAs: N(1) methylation takes place in tRNA T-loop-like structures of mRNAs and is only present at low stoichiometries. This Mus musculus (Mouse) protein is tRNA (adenine(58)-N(1))-methyltransferase catalytic subunit TRMT61A (Trmt61a).